The sequence spans 421 residues: Histidine--tRNA ligase (421 aa).

Belongs to the class-II aminoacyl-tRNA synthetase family. In terms of assembly, homodimer.

It localises to the cytoplasm. It catalyses the reaction tRNA(His) + L-histidine + ATP = L-histidyl-tRNA(His) + AMP + diphosphate + H(+). This Ureaplasma urealyticum serovar 10 (strain ATCC 33699 / Western) protein is Histidine--tRNA ligase.